We begin with the raw amino-acid sequence, 1490 residues long: ABC transporter CDR4 (1490 aa).

A compositionally biased stretch (polar residues) spans 1–12 (MADADTSSNSSK). Disordered regions lie at residues 1–26 (MADA…GTYQ) and 53–75 (LKRQ…LSGK). Residues 1 to 516 (MADADTSSNS…NILRIKGNPS (516 aa)) lie on the Cytoplasmic side of the membrane. Residues 58–67 (SRQESQKSNE) show a composition bias toward basic and acidic residues. Residues 151 to 407 (PKYLSLFFRE…FIDMGYECPQ (257 aa)) form the ABC transporter 1 domain. Helical transmembrane passes span 517–537 (IHLF…SIFY), 551–571 (AALF…IFSL), 601–621 (LPTK…MVNF), 626–646 (GNFF…SHIF), 659–679 (AMTP…FVIP), and 767–787 (FGIV…LCEI). The Cytoplasmic segment spans residues 788 to 1182 (NKGAMQKGEI…VFEQNWRTPS (395 aa)). The ABC transporter 2 domain occupies 846–1090 (FFWRDLTYQV…LINYFEKYGA (245 aa)). 882–889 (GASGAGKT) is a binding site for ATP. Helical transmembrane passes span 1183–1203 (YLYS…FSFY), 1217–1237 (FSVF…LPTF), and 1268–1288 (IPWN…PVGL). The N-linked (GlcNAc...) asparagine glycan is linked to asparagine 1291. Helical transmembrane passes span 1304–1324 (FMWF…QLCI), 1333–1353 (AANL…VLVT), and 1370–1390 (FTYL…VTCA). N-linked (GlcNAc...) asparagine glycosylation occurs at asparagine 1424. A helical membrane pass occupies residues 1455–1475 (IGIYIAFIGINIIGTFILYWF).

It belongs to the ABC transporter superfamily. ABCG family. PDR (TC 3.A.1.205) subfamily.

Its subcellular location is the membrane. This chain is ABC transporter CDR4 (CDR4), found in Candida albicans (Yeast).